A 556-amino-acid chain; its full sequence is MDKRHDPSRRIIAPTGTKLSCKSWLTEAPMRMLMNNLHPDVAERPEDLVVYGGIGRAARDWECYDKIVEVLQRLEDDETLLVQSGKPVGVFKTHSNAPRVIIANSNLVPHWANWEHFNELDKKGLAMYGQMTAGSWIYIGSQGIVQGTYETFVAMAKQHFGGSSKGKWILTGGLGGMGGAQPLAGTMAGYSVLTCEVDETRIDFRLRTRYVDKKATTLDEALAMIDEANASGKPVSVGLLANAADVFAELVERGITPDVVTDQTSAHDPLNGYLPQGWTLEQAAQMRKTDEAAVVKAAKQSMAVQVKAMLALQAAGSATTDYGNNIRQMAFEEGVENAFDFPGFVPAYVRPLFCEGIGPFRWAALSGDPEDIYKTDAKVKELIPDNPHLHNWLDMARERIAFQGLPSRICWVGLKDRARLALAFNEMVNNGELSAPVVIGRDHLDSGSVASPNRETESMLDGSDAVSDWPLMNALLNTASGATWVSLHHGGGVGMGFSQHSGVVIVADGTDDAAARLGRVLWNDPATGVMRHADAGYDIAKDCAKEQGLDLPMLEK.

Residues glycine 52–glycine 53, glutamine 130, glycine 176–glycine 178, glutamate 196, arginine 201, asparagine 242–alanine 243, glutamine 263–histidine 267, tyrosine 273–leucine 274, and tyrosine 322 contribute to the NAD(+) site. The active site involves cysteine 410. Position 492 (glycine 492) interacts with NAD(+).

It belongs to the urocanase family. NAD(+) is required as a cofactor.

Its subcellular location is the cytoplasm. It carries out the reaction 4-imidazolone-5-propanoate = trans-urocanate + H2O. The protein operates within amino-acid degradation; L-histidine degradation into L-glutamate; N-formimidoyl-L-glutamate from L-histidine: step 2/3. Functionally, catalyzes the conversion of urocanate to 4-imidazolone-5-propionate. The protein is Urocanate hydratase of Shewanella piezotolerans (strain WP3 / JCM 13877).